Here is a 442-residue protein sequence, read N- to C-terminus: Putative major teichoic acid biosynthesis protein C (442 aa).

Functionally, unknown. Might be involved in poly(glycerol phosphate) teichoic acid biosynthesis. The sequence is that of Putative major teichoic acid biosynthesis protein C (tagC) from Bacillus subtilis (strain 168).